Here is a 239-residue protein sequence, read N- to C-terminus: Protein GrpE (239 aa).

Disordered regions lie at residues 1 to 54 (MIEN…ELKN) and 208 to 239 (SMGPGKQNSQEEVEKDKVEGDIDSEENTSEDV). Polar residues predominate over residues 19-42 (QDNALENVSSAQELTTENNELSSQ). Residues 43-53 (KTEEINTEELK) show a composition bias toward basic and acidic residues. The segment covering 228-239 (DIDSEENTSEDV) has biased composition (acidic residues).

The protein belongs to the GrpE family. Homodimer.

Its subcellular location is the cytoplasm. Participates actively in the response to hyperosmotic and heat shock by preventing the aggregation of stress-denatured proteins, in association with DnaK and GrpE. It is the nucleotide exchange factor for DnaK and may function as a thermosensor. Unfolded proteins bind initially to DnaJ; upon interaction with the DnaJ-bound protein, DnaK hydrolyzes its bound ATP, resulting in the formation of a stable complex. GrpE releases ADP from DnaK; ATP binding to DnaK triggers the release of the substrate protein, thus completing the reaction cycle. Several rounds of ATP-dependent interactions between DnaJ, DnaK and GrpE are required for fully efficient folding. The protein is Protein GrpE of Prochlorococcus marinus (strain AS9601).